The chain runs to 208 residues: 28 kDa heat- and acid-stable phosphoprotein homolog (208 aa).

2 disordered regions span residues 1 to 133 (MAGG…VTKK) and 145 to 208 (LSRR…LGLA). Positions 16–44 (FGRDYERSKGKISRDRVYDEEDIIKRNQE) are enriched in basic and acidic residues. Composition is skewed to low complexity over residues 52–69 (GSES…NKSK) and 84–100 (RNPN…PTTK). The span at 105–121 (SDSEDDSDKESDSEDEI) shows a compositional bias: acidic residues. Residues 137-206 (INVNAKVELS…EKMAERRRLG (70 aa)) are a coiled coil. 2 stretches are compositionally biased toward basic and acidic residues: residues 145–154 (LSRREKEELA) and 162–208 (QNEK…LGLA).

The protein belongs to the PDAP1 family.

This chain is 28 kDa heat- and acid-stable phosphoprotein homolog, found in Dictyostelium discoideum (Social amoeba).